Reading from the N-terminus, the 234-residue chain is Large ribosomal subunit protein bL25 (234 aa).

A disordered region spans residues 1–24 (MATVMELKATARPKSGKGAARAER).

It belongs to the bacterial ribosomal protein bL25 family. CTC subfamily. As to quaternary structure, part of the 50S ribosomal subunit; part of the 5S rRNA/L5/L18/L25 subcomplex. Contacts the 5S rRNA. Binds to the 5S rRNA independently of L5 and L18.

Functionally, this is one of the proteins that binds to the 5S RNA in the ribosome where it forms part of the central protuberance. This is Large ribosomal subunit protein bL25 from Rhodopseudomonas palustris (strain BisB5).